Here is a 451-residue protein sequence, read N- to C-terminus: Enolase (451 aa).

(2R)-2-phosphoglycerate is bound at residue Q167. The Proton donor role is filled by E209. Mg(2+)-binding residues include D250, E307, and D334. The (2R)-2-phosphoglycerate site is built by K359, R388, S389, and K410. K359 (proton acceptor) is an active-site residue.

The protein belongs to the enolase family. The cofactor is Mg(2+).

The protein localises to the cytoplasm. The protein resides in the secreted. It is found in the cell surface. It catalyses the reaction (2R)-2-phosphoglycerate = phosphoenolpyruvate + H2O. It participates in carbohydrate degradation; glycolysis; pyruvate from D-glyceraldehyde 3-phosphate: step 4/5. Its function is as follows. Catalyzes the reversible conversion of 2-phosphoglycerate (2-PG) into phosphoenolpyruvate (PEP). It is essential for the degradation of carbohydrates via glycolysis. In Mesomycoplasma hyopneumoniae (strain J / ATCC 25934 / NCTC 10110) (Mycoplasma hyopneumoniae), this protein is Enolase.